We begin with the raw amino-acid sequence, 575 residues long: Envelope glycoprotein E (575 aa).

The signal sequence occupies residues 1–26 (MQPTAPPRRRLLPLLLPQLLLFGLMA). Topologically, residues 27–423 (EAEPATETPG…AGAPTGPAPW (397 aa)) are virion surface. Residues 76-101 (CSPPVPEPVCLDDRECFTDVALDAAC) form an interaction with gI region. A glycan (N-linked (GlcNAc...) asparagine; by host) is linked at Asn141. Residues 186–218 (AQGAARDEEREPATGPTPGPPPHRTTTRAPPRR) are disordered. 3 disulfide bridges follow: Cys270–Cys296, Cys279–Cys288, and Cys315–Cys327. The N-linked (GlcNAc...) asparagine; by host glycan is linked to Asn343. Residues 394 to 416 (RPEAAAADAPEPGPPLTSEPAGA) are disordered. The chain crosses the membrane as a helical span at residues 424-444 (LVVLVGALGLAGLVGIAALAV). At 445 to 575 (RVCARRASQK…VAARLKSILR (131 aa)) the chain is on the intravirion side. An Internalization motif motif is present at residues 467 to 470 (YTSL). The interval 484 to 502 (DDEFSLDEDSFADDDSDDD) is acidic. A compositionally biased stretch (acidic residues) spans 491–503 (EDSFADDDSDDDG). The segment at 491 to 560 (EDSFADDDSD…DAAPARAPAA (70 aa)) is disordered.

It belongs to the alphaherpesvirinae glycoprotein E family. In terms of assembly, interacts with gI. In terms of processing, phosphorylated on serines within the acidic cluster. Phosphorylation determines whether endocytosed viral gE traffics to the trans-Golgi network or recycles to the cell membrane.

It is found in the virion membrane. Its subcellular location is the host cell membrane. It localises to the host cell junction. The protein resides in the host Golgi apparatus membrane. The protein localises to the host endosome membrane. In epithelial cells, the heterodimer gE/gI is required for the cell-to-cell spread of the virus, by sorting nascent virions to cell junctions. Once the virus reaches the cell junctions, virus particles can spread to adjacent cells extremely rapidly through interactions with cellular receptors that accumulate at these junctions. Implicated in basolateral spread in polarized cells. In neuronal cells, gE/gI is essential for the anterograde spread of the infection throughout the host nervous system. Together with US9, the heterodimer gE/gI is involved in the sorting and transport of viral structural components toward axon tips. The sequence is that of Envelope glycoprotein E (gE) from Bos taurus (Bovine).